Reading from the N-terminus, the 262-residue chain is Protein BREAKING OF ASYMMETRY IN THE STOMATAL LINEAGE (262 aa).

2 disordered regions span residues 32-107 (DEDG…QPPV) and 129-222 (KEGK…GRGS). Positions 37–47 (NNNGNTTNNNN) are enriched in low complexity. Short sequence motifs (nuclear localization signal) lie at residues 50–57 (FKRIKRKI) and 61–68 (KKKRSERK). The segment covering 51-66 (KRIKRKIKSTKKKRSE) has biased composition (basic residues). A phosphoserine; by ASK7 mark is found at serine 72, serine 85, serine 86, and serine 87. A compositionally biased stretch (low complexity) spans 84–95 (RSSSVSPTTSGS). Serine 89 is modified (phosphoserine; by ASK7 and MPK6). Threonine 91 bears the Phosphothreonine; by ASK7 mark. Basic and acidic residues predominate over residues 129–146 (KEGKQEKKETESSSEKSP). Serine 145 and serine 168 each carry phosphoserine; by MPK6. Residues 179–189 (NDNTSCQGTKD) are compositionally biased toward polar residues. Over residues 190 to 200 (VSSDVTERTKE) the composition is skewed to basic and acidic residues. A required for polarization at the cell cortex region spans residues 222–262 (SFAFPILGVEWMGSPAKMPESDDLSPKKQKPVALGFQCCRF). The FxFP, required for cortical polarity formation signature appears at 223–226 (FAFP). 2 positions are modified to phosphoserine; by MPK6: serine 235 and serine 246.

Component of a complex made of POLAR, BASL, ASK7/BIN2 and ASK3/SK12. Interacts with POLAR, ASK7/BIN2 and ASK3/SK12. Binds to YDA when phosphorylated. Interacts with MPK6, MPK3 and MKK5. Cortical localization of BASL requires phosphorylation mediated by MPK3 and MPK6. Phosphorylation promotes YDA binding. Phosphorylation status modulates subcellular mobility. Mostly expressed in stomatal lineage cells including asymmetrically dividing meristemoid mother cells (MMCs) and meristemoids, and, at lower levels, in their sisters. Also present in vasculature. Expressed at low levels in the epidermal pavement cells.

It is found in the cytoplasm. The protein localises to the nucleus. It localises to the cell cortex. Its subcellular location is the cell membrane. Its function is as follows. Regulates asymmetric cell division (ACD), especially in stomatal-lineage cells, probably by modulating accumulation and subcellular polarization of POLAR and SPCH. Mediates an attenuation of MAPK signaling upon polarization of POLAR and ASK7/BIN2 in stomatal lineage ground cells (SLGCs) undergoing ACD, and relieves BIN2 inhibition of SPCH in the nucleus. When phosphorylated, functions as a scaffold and recruits the MAPKKK YODA, MPK3 and MPK6 to spatially reorganize the MAPK signaling pathway at the cortex of cells undergoing ACD. Cortical polarization leads to elevated nuclear MPK6 signaling and lowered SPCH abundance in one of the two daughter cells, thus differentiating the two daughter cells after ACD. This chain is Protein BREAKING OF ASYMMETRY IN THE STOMATAL LINEAGE, found in Arabidopsis thaliana (Mouse-ear cress).